The primary structure comprises 63 residues: High-potential iron-sulfur protein (63 aa).

Positions 23, 26, 41, and 56 each coordinate [4Fe-4S] cluster.

The protein belongs to the high-potential iron-sulfur protein (HiPIP) family. In terms of assembly, homodimer.

In terms of biological role, specific class of high-redox-potential 4Fe-4S ferredoxins. Functions in anaerobic electron transport in most purple and in some other photosynthetic bacteria and in at least one genus (Paracoccus) of halophilic, denitrifying bacteria. This Rhodocyclus tenuis (Rhodospirillum tenue) protein is High-potential iron-sulfur protein (hip).